The chain runs to 361 residues: Beta-hexosaminidase (361 aa).

Residues Asp69, Arg77, Arg144, and 174–175 (KH) contribute to the substrate site. The active-site Proton donor/acceptor is His187. Asp258 serves as the catalytic Nucleophile.

The protein belongs to the glycosyl hydrolase 3 family. NagZ subfamily.

Its subcellular location is the cytoplasm. The catalysed reaction is Hydrolysis of terminal non-reducing N-acetyl-D-hexosamine residues in N-acetyl-beta-D-hexosaminides.. It functions in the pathway cell wall biogenesis; peptidoglycan recycling. In terms of biological role, plays a role in peptidoglycan recycling by cleaving the terminal beta-1,4-linked N-acetylglucosamine (GlcNAc) from peptide-linked peptidoglycan fragments, giving rise to free GlcNAc, anhydro-N-acetylmuramic acid and anhydro-N-acetylmuramic acid-linked peptides. In Neisseria meningitidis serogroup C (strain 053442), this protein is Beta-hexosaminidase.